The following is a 35-amino-acid chain: Cupiennin-2a (35 aa).

K35 carries the post-translational modification Lysine amide.

Expressed by the venom gland.

Its subcellular location is the secreted. The chain is Cupiennin-2a from Cupiennius salei (American wandering spider).